The sequence spans 89 residues: Small ribosomal subunit protein uS15 (89 aa).

The span at 1-18 shows a compositional bias: basic and acidic residues; sequence MSLDTAEKQKLIENHQVH. The interval 1–23 is disordered; that stretch reads MSLDTAEKQKLIENHQVHPTDTG.

This sequence belongs to the universal ribosomal protein uS15 family. Part of the 30S ribosomal subunit. Forms a bridge to the 50S subunit in the 70S ribosome, contacting the 23S rRNA.

In terms of biological role, one of the primary rRNA binding proteins, it binds directly to 16S rRNA where it helps nucleate assembly of the platform of the 30S subunit by binding and bridging several RNA helices of the 16S rRNA. Functionally, forms an intersubunit bridge (bridge B4) with the 23S rRNA of the 50S subunit in the ribosome. The protein is Small ribosomal subunit protein uS15 of Prochlorococcus marinus (strain AS9601).